We begin with the raw amino-acid sequence, 325 residues long: Golgi to ER traffic protein 4 homolog A (325 aa).

2 disordered regions span residues 1–22 (MAAAMAEQEGSKGSARNRGGVQ) and 306–325 (SGEDDDVEDGQEDSSPIELD). Acidic residues predominate over residues 307–317 (GEDDDVEDGQE).

Belongs to the GET4 family. In terms of assembly, component of the bag6/bat3 complex.

Its subcellular location is the cytoplasm. The protein resides in the cytosol. In terms of biological role, as part of a cytosolic protein quality control complex, the bag6/bat3 complex, maintains misfolded and hydrophobic patches-containing proteins in a soluble state and participates in their proper delivery to the endoplasmic reticulum or alternatively can promote their sorting to the proteasome where they undergo degradation. The bag6/bat3 complex is involved in the post-translational delivery of tail-anchored/type II transmembrane proteins to the endoplasmic reticulum membrane. Similarly, the bag6/bat3 complex also functions as a sorting platform for proteins of the secretory pathway that are mislocalized to the cytosol either delivering them to the proteasome for degradation or to the endoplasmic reticulum. The bag6/bat3 complex also plays a role in the endoplasmic reticulum-associated degradation (ERAD), a quality control mechanism that eliminates unwanted proteins of the endoplasmic reticulum through their retrotranslocation to the cytosol and their targeting to the proteasome. It maintains these retrotranslocated proteins in an unfolded yet soluble state condition in the cytosol to ensure their proper delivery to the proteasome. This chain is Golgi to ER traffic protein 4 homolog A (get4-a), found in Xenopus laevis (African clawed frog).